A 282-amino-acid chain; its full sequence is Pantothenate synthetase (282 aa).

Residue 31–38 (MGYLHEGH) participates in ATP binding. Catalysis depends on H38, which acts as the Proton donor. Q62 lines the (R)-pantoate pocket. Beta-alanine is bound at residue Q62. 148–151 (GEKD) lines the ATP pocket. Q154 provides a ligand contact to (R)-pantoate. ATP contacts are provided by residues V177 and 185–188 (YSSR).

Belongs to the pantothenate synthetase family. Homodimer.

The protein resides in the cytoplasm. It catalyses the reaction (R)-pantoate + beta-alanine + ATP = (R)-pantothenate + AMP + diphosphate + H(+). It functions in the pathway cofactor biosynthesis; (R)-pantothenate biosynthesis; (R)-pantothenate from (R)-pantoate and beta-alanine: step 1/1. Catalyzes the condensation of pantoate with beta-alanine in an ATP-dependent reaction via a pantoyl-adenylate intermediate. This is Pantothenate synthetase from Aquifex aeolicus (strain VF5).